A 152-amino-acid chain; its full sequence is Transcriptional regulator MraZ (152 aa).

2 SpoVT-AbrB domains span residues 5 to 52 (ATMV…TLPA) and 81 to 124 (ASEC…DEQT).

This sequence belongs to the MraZ family. As to quaternary structure, forms oligomers.

The protein resides in the cytoplasm. Its subcellular location is the nucleoid. Negatively regulates its own expression and that of the subsequent genes in the proximal part of the division and cell wall (dcw) gene cluster. Acts by binding directly to DNA. May also regulate the expression of genes outside the dcw cluster. The protein is Transcriptional regulator MraZ of Yersinia enterocolitica serotype O:8 / biotype 1B (strain NCTC 13174 / 8081).